The chain runs to 517 residues: Cytochrome P450 52A8 (517 aa).

A heme-binding site is contributed by Cys-464.

It belongs to the cytochrome P450 family. It depends on heme as a cofactor.

Functionally, together with an NADPH cytochrome P450 the enzyme system catalyzes the terminal hydroxylation as the first step in the assimilation of alkanes and fatty acids. Preferentially hydroxylates lauric acid. The chain is Cytochrome P450 52A8 (CYP52A8) from Candida tropicalis (Yeast).